Reading from the N-terminus, the 130-residue chain is Small ribosomal subunit protein uS9 (130 aa).

Belongs to the universal ribosomal protein uS9 family.

In Clostridium beijerinckii (strain ATCC 51743 / NCIMB 8052) (Clostridium acetobutylicum), this protein is Small ribosomal subunit protein uS9.